Reading from the N-terminus, the 139-residue chain is uncharacterized protein (139 aa).

In terms of domain architecture, HTH cro/C1-type spans 8–63 (LRELRRARKLTVNQLAVYSGISSATISKIENGKRGTPKPATIKKLAAVLKVPYENL). The segment at residues 19-38 (VNQLAVYSGISSATISKIEN) is a DNA-binding region (H-T-H motif).

This is an uncharacterized protein from Bacillus subtilis (strain 168).